A 715-amino-acid polypeptide reads, in one-letter code: MSKAHKSWPHRRRNQFSSQRSLKKEMNFFQQQPPPFGTVPPQMTFPPNWQGVEKDPAFLTKDFNLLTLNNQPLPGNTSQPRAKGPENNLHNQYEQKVRPYIDLIDSLRALGVEQDLALPAIAVIGDQSSGKSSVLEALSGVALPRGSGIVTRCPLVLKLKKQPYKAWAGRISYQNTEIELQDPGQVEKEIHKAQNVMAGNGLGISHELISLEITSPEVPDLTIIDLPGIARVAVGNQPRDIGLQIKALIKRYIQRQQTINLVVVPCNVDIATTEALSMAHEVDPEGDRTIGILTKPDLMDRGTEKSIINVVRNLTYPLKKGYMIVKCRGQQEIINRLSLAEATKKEITFFQTHPCFRVLLEEGSATVPRLAERLTAELITHIQKSLPLLEEQIRESHQKATEELRRCGADIPSQDADKMFFLIEKIKMFNQDIEKLIEGEEVVRENETRLYNKIREDFKNWIGILATNTQKVKNIIHEEVEKYEKQYRGKELLGFVNYKTFETIVHQYIQHLVEPALSMLQKAVEIIRQAFVNMAKKHFGEFFNLNHTVQSKIEDIKVRHTEKAENMIQLQFRMEQIVFCQDQIYSVVVKKVREEIFNPLGKPSQNMKLNSHFPINESSVSSFNEIGVHLNAYFSETSTRLANQIPFIIQYFMLRENGDSLQKAMMQILQEKNRYSWLLQEQSETATKRRMLKERIYRLTQARHALCQFSSKEIH.

Residues 1 to 14 (MSKAHKSWPHRRRN) show a composition bias toward basic residues. Disordered stretches follow at residues 1–24 (MSKA…SLKK) and 69–88 (NNQP…PENN). The span at 69-80 (NNQPLPGNTSQP) shows a compositional bias: polar residues. The region spanning 115–387 (DLALPAIAVI…LITHIQKSLP (273 aa)) is the Dynamin-type G domain. Residues 125–132 (GDQSSGKS) are G1 motif. 125–132 (GDQSSGKS) contacts GTP. Positions 150 to 152 (VTR) are G2 motif. Positions 225–228 (DLPG) are G3 motif. GTP contacts are provided by residues 225 to 229 (DLPGI) and 294 to 297 (TKPD). Residues 294 to 297 (TKPD) form a G4 motif region. A G5 motif region spans residues 326 to 329 (KCRG). Residues 623–714 (FNEIGVHLNA…ALCQFSSKEI (92 aa)) form the GED domain.

This sequence belongs to the TRAFAC class dynamin-like GTPase superfamily. Dynamin/Fzo/YdjA family.

The protein resides in the cytoplasm. The protein localises to the nucleus. Interferon-induced dynamin-like GTPase with antiviral activity. This Macaca mulatta (Rhesus macaque) protein is Interferon-induced GTP-binding protein Mx2 (MX2).